Reading from the N-terminus, the 244-residue chain is UL16-binding protein 1 (244 aa).

The N-terminal stretch at 1–25 is a signal peptide; it reads MAAAASPAFLLCLPLLHLLSGWSRA. The segment at 26–117 is MHC class I alpha-1 like; sequence GWVDTHCLCY…IQVENLIPIE (92 aa). A disulfide bond links Cys-50 and Cys-66. Residue Asn-82 is glycosylated (N-linked (GlcNAc...) asparagine). The tract at residues 118–208 is MHC class I alpha-2 like; it reads PLTLQARMSC…MYWEQMLDPT (91 aa). Cys-127 and Cys-190 are oxidised to a cystine. Gly-216 carries GPI-anchor amidated glycine lipidation. Residues 217-244 constitute a propeptide, removed in mature form; the sequence is TTQPKAMATTLSPWSLLIIFLCFILAGR.

The protein belongs to the MHC class I family. In terms of assembly, interacts with KLRK1/NKG2D. Does not bind to beta2-microglobulin. (Microbial infection) In CMV-infected cells, interacts with the viral glycoprotein UL16; this interaction causes ULBP1 retention in the endoplasmic reticulum and cis-Golgi and prevents binding to and activation of KLRK1/NKG2D, providing CMV with an immune evasion mechanism. As to expression, expressed in T-cells, B-cells, erythroleukemia cell lines and in a wide range of tissues including heart, brain, lung, liver, testis, lymph node, thymus, tonsil and bone marrow. Also found in fetal heart, brain, lung and liver.

The protein resides in the cell membrane. The protein localises to the endoplasmic reticulum. Functionally, binds and activates the KLRK1/NKG2D receptor, mediating natural killer cell cytotoxicity. The protein is UL16-binding protein 1 (ULBP1) of Homo sapiens (Human).